Here is a 368-residue protein sequence, read N- to C-terminus: Cyclic di-GMP phosphodiesterase TM_0186 (368 aa).

The Response regulatory domain occupies 2–114; the sequence is TVLIVEDDDI…LLRLKITHAL (113 aa). Position 49 is a 4-aspartylphosphate (Asp49). Residues 148–345 form the HD-GYP domain; it reads YEDFLFEVLE…ITDVYRREKD (198 aa). The a divalent metal cation site is built by Glu169, His173, His205, Asp206, His234, His260, His261, and Asp289. Residues 341–368 form a disordered region; it reads RREKDEDTSHNGGRSHQSSPGEGVEGIR. A compositionally biased stretch (polar residues) spans 350–360; sequence HNGGRSHQSSP.

The catalysed reaction is 3',3'-c-di-GMP + 2 H2O = 2 GMP + 2 H(+). Its activity is regulated as follows. Can function in vivo with either divalent iron or manganese occupying di- and trimetal sites. Dimetal is necessary and sufficient to catalyze conversion of c-di-GMP to pGpG, but conversion of pGpG to GMP requires an occupied trimetal site. Its function is as follows. Phosphodiesterase (PDE) that catalyzes the hydrolysis of cyclic diguanylate (c-di-GMP) to GMP. Hydrolyzes c-di-GMP to GMP in a two-step reaction, via the linear intermediate 5'-phosphoguanylyl(3'-&gt;5')guanosine (pGpG). The protein is Cyclic di-GMP phosphodiesterase TM_0186 of Thermotoga maritima (strain ATCC 43589 / DSM 3109 / JCM 10099 / NBRC 100826 / MSB8).